Here is a 244-residue protein sequence, read N- to C-terminus: tRNA (guanine-N(1)-)-methyltransferase (244 aa).

Residues glycine 113 and 133-138 (IGDYVL) each bind S-adenosyl-L-methionine.

Belongs to the RNA methyltransferase TrmD family. In terms of assembly, homodimer.

Its subcellular location is the cytoplasm. The catalysed reaction is guanosine(37) in tRNA + S-adenosyl-L-methionine = N(1)-methylguanosine(37) in tRNA + S-adenosyl-L-homocysteine + H(+). Functionally, specifically methylates guanosine-37 in various tRNAs. The polypeptide is tRNA (guanine-N(1)-)-methyltransferase (Bacillus cereus (strain B4264)).